We begin with the raw amino-acid sequence, 311 residues long: HTH-type transcriptional regulator PcaQ (311 aa).

The 58-residue stretch at 6-63 folds into the HTH lysR-type domain; the sequence is IKFRHLQTFVEVARQKSVIRAAEILHVSQPAVTKTIRELEDVLGVSLLEREGRGIRIS. The segment at residues 23 to 42 is a DNA-binding region (H-T-H motif); it reads VIRAAEILHVSQPAVTKTIR.

It belongs to the LysR transcriptional regulatory family.

Activates transcription of the pcaDCHGB operon for the catabolism of the phenolic compound protocatechuate. In Agrobacterium fabrum (strain C58 / ATCC 33970) (Agrobacterium tumefaciens (strain C58)), this protein is HTH-type transcriptional regulator PcaQ (pcaQ).